An 82-amino-acid chain; its full sequence is Large ribosomal subunit protein bL31B-2 (82 aa).

Belongs to the bacterial ribosomal protein bL31 family. Type B subfamily. Part of the 50S ribosomal subunit.

The protein is Large ribosomal subunit protein bL31B-2 of Streptomyces avermitilis (strain ATCC 31267 / DSM 46492 / JCM 5070 / NBRC 14893 / NCIMB 12804 / NRRL 8165 / MA-4680).